The chain runs to 184 residues: Ribosome maturation factor RimM (184 aa).

The PRC barrel domain maps to glutamate 105 to phenylalanine 184.

The protein belongs to the RimM family. In terms of assembly, binds ribosomal protein uS19.

It localises to the cytoplasm. In terms of biological role, an accessory protein needed during the final step in the assembly of 30S ribosomal subunit, possibly for assembly of the head region. Essential for efficient processing of 16S rRNA. May be needed both before and after RbfA during the maturation of 16S rRNA. It has affinity for free ribosomal 30S subunits but not for 70S ribosomes. This is Ribosome maturation factor RimM from Vibrio cholerae serotype O1 (strain ATCC 39541 / Classical Ogawa 395 / O395).